Here is a 442-residue protein sequence, read N- to C-terminus: UDP-N-acetylglucosamine--peptide N-acetylglucosaminyltransferase stabilizing protein GtfB (442 aa).

The protein belongs to the GtfB family. Interacts with glycosyltransferase GtfA (Gtf1). Interacts with glycosyltransferase GtfA; probably forms a heterotetramer with 2 subunits each of GtfA and GtfB. Part of the accessory SecA2/SecY2 protein translocation apparatus.

It localises to the cell membrane. The protein operates within protein modification; protein glycosylation. In terms of biological role, required for the polymorphic O-glycosylation of the serine-rich repeat protein Srr2. A stabilizing protein that is part of the accessory SecA2/SecY2 system specifically required to export serine-rich repeat proteins, probably Srr2 in this organism. The GtfA-GtfB (Gtf1-Gtf2 in this bacteria) complex adds GlcNAc from UDP-GlcNAc to Srr2 substrate, attaching the first sugar residue. Stabilizes the glycosylation activity of GtfA in vivo. Upon expression in a gtfB deletion mutant of S.parasanguis, GtfB confers incorrect glycosylation and partial complementation of a biofilm formation defect, while GtfA/GtfB restores correct expression of serine-rich repeat protein Fap1 and completely restores a biofilm formation defect in a S.parasanguis double gtfA-gtfB deletion. This Streptococcus agalactiae protein is UDP-N-acetylglucosamine--peptide N-acetylglucosaminyltransferase stabilizing protein GtfB.